The primary structure comprises 294 residues: Putative cuticle collagen 145 (294 aa).

An N-terminal signal peptide occupies residues 1–30; that stretch reads MEKILVTFSTGAASIAVLAVLFTVPSLYNT. A compositionally biased stretch (pro residues) spans 100-112; the sequence is TCPPGPPGPPGQP. Disordered regions lie at residues 100-133 and 148-276; these read TCPPGPPGPPGQPGAPGTPGAPGPKGDDNTATFA and PQGP…LPGN. Triple-helical region regions lie at residues 102–127 and 148–277; these read PPGPPGPPGQPGAPGTPGAPGPKGDD and PQGP…PGND. 2 stretches are compositionally biased toward low complexity: residues 164–194 and 219–265; these read AGPDGQPGFPGQRGNDGFPGAPGAPGDNGQP and APGA…DGQP. One can recognise a Collagen-like domain in the interval 218–276; that stretch reads GAPGAPGNAGPAGPAGQDGFPGQDGAPGPAGPAGQDGFPGNAGSDGQPGAPGGPGLPGN.

The protein belongs to the cuticular collagen family. In terms of assembly, collagen polypeptide chains are complexed within the cuticle by disulfide bonds and other types of covalent cross-links.

Functionally, nematode cuticles are composed largely of collagen-like proteins. The cuticle functions both as an exoskeleton and as a barrier to protect the worm from its environment. In Caenorhabditis elegans, this protein is Putative cuticle collagen 145 (col-145).